The primary structure comprises 90 residues: Beta-microseminoprotein (90 aa).

5 disulfides stabilise this stretch: cysteine 2/cysteine 16, cysteine 34/cysteine 70, cysteine 37/cysteine 46, cysteine 39/cysteine 47, and cysteine 61/cysteine 84. Valine 90 carries the valine amide modification.

This sequence belongs to the beta-microseminoprotein family.

It is found in the secreted. This chain is Beta-microseminoprotein (MSMB), found in Struthio camelus (Common ostrich).